Reading from the N-terminus, the 87-residue chain is uncharacterized protein (87 aa).

To B.subtilis XkdR.

This is an uncharacterized protein from Bacillus subtilis (strain 168).